The following is a 521-amino-acid chain: 3,4-dihydroxyphenylacetaldehyde synthase (521 aa).

Lysine 306 is modified (N6-(pyridoxal phosphate)lysine).

Belongs to the group II decarboxylase family. Pyridoxal 5'-phosphate serves as cofactor. As to expression, highly expressed in the cuticle and midgut. Low expression in the head and thorax.

It carries out the reaction L-dopa + O2 + H2O + H(+) = 3,4-dihydroxyphenylacetaldehyde + H2O2 + NH4(+) + CO2. Catalyzes the decarboxylation-oxidative deamination of L-3,4-dihydroxyphenylalanine (L-DOPA) to 3,4-dihydroxylphenylacetaldehyde (DHPAA). Involved in cuticle development. Probably responsible for the protein cross-linking during the development of flexible cuticles. The polypeptide is 3,4-dihydroxyphenylacetaldehyde synthase (Aedes aegypti (Yellowfever mosquito)).